Reading from the N-terminus, the 120-residue chain is NAD(P)H-quinone oxidoreductase subunit 3 (120 aa).

The next 3 membrane-spanning stretches (helical) occupy residues 10–30, 64–84, and 89–109; these read FLGFLLIAAAVPILALVTNLI, MFALVFVIFDVETVFLYPWAV, and LGLLAFIEALIFIAILVIALA.

Belongs to the complex I subunit 3 family. In terms of assembly, NDH-1 can be composed of about 15 different subunits; different subcomplexes with different compositions have been identified which probably have different functions.

It localises to the cellular thylakoid membrane. It carries out the reaction a plastoquinone + NADH + (n+1) H(+)(in) = a plastoquinol + NAD(+) + n H(+)(out). The enzyme catalyses a plastoquinone + NADPH + (n+1) H(+)(in) = a plastoquinol + NADP(+) + n H(+)(out). NDH-1 shuttles electrons from an unknown electron donor, via FMN and iron-sulfur (Fe-S) centers, to quinones in the respiratory and/or the photosynthetic chain. The immediate electron acceptor for the enzyme in this species is believed to be plastoquinone. Couples the redox reaction to proton translocation, and thus conserves the redox energy in a proton gradient. Cyanobacterial NDH-1 also plays a role in inorganic carbon-concentration. The polypeptide is NAD(P)H-quinone oxidoreductase subunit 3 (Prochlorococcus marinus (strain MIT 9312)).